The following is a 535-amino-acid chain: CTP synthase (535 aa).

Positions 1–268 (MSTKYIFVTG…DQIVCDHLKL (268 aa)) are amidoligase domain. Serine 14 provides a ligand contact to CTP. Serine 14 contributes to the UTP binding site. ATP is bound at residue 15-20 (SIGKGI). Tyrosine 55 provides a ligand contact to L-glutamine. Aspartate 72 provides a ligand contact to ATP. Mg(2+) is bound by residues aspartate 72 and glutamate 142. CTP is bound by residues 149-151 (DIE), 189-194 (KTKPTQ), and lysine 225. UTP is bound by residues 189-194 (KTKPTQ) and lysine 225. Residues 293 to 535 (KISLVGKYVE…FVTAAVENSN (243 aa)) enclose the Glutamine amidotransferase type-1 domain. Glycine 355 is an L-glutamine binding site. Catalysis depends on cysteine 382, which acts as the Nucleophile; for glutamine hydrolysis. L-glutamine is bound by residues 383–386 (LGMQ), glutamate 406, and arginine 464. Active-site residues include histidine 509 and glutamate 511.

This sequence belongs to the CTP synthase family. Homotetramer.

It catalyses the reaction UTP + L-glutamine + ATP + H2O = CTP + L-glutamate + ADP + phosphate + 2 H(+). The enzyme catalyses L-glutamine + H2O = L-glutamate + NH4(+). The catalysed reaction is UTP + NH4(+) + ATP = CTP + ADP + phosphate + 2 H(+). The protein operates within pyrimidine metabolism; CTP biosynthesis via de novo pathway; CTP from UDP: step 2/2. With respect to regulation, allosterically activated by GTP, when glutamine is the substrate; GTP has no effect on the reaction when ammonia is the substrate. The allosteric effector GTP functions by stabilizing the protein conformation that binds the tetrahedral intermediate(s) formed during glutamine hydrolysis. Inhibited by the product CTP, via allosteric rather than competitive inhibition. In terms of biological role, catalyzes the ATP-dependent amination of UTP to CTP with either L-glutamine or ammonia as the source of nitrogen. Regulates intracellular CTP levels through interactions with the four ribonucleotide triphosphates. In Streptococcus pneumoniae (strain ATCC BAA-255 / R6), this protein is CTP synthase.